We begin with the raw amino-acid sequence, 89 residues long: Small ribosomal subunit protein bS20 (89 aa).

The segment at 1–28 (MANHYSALKRARQTETRTARNRANTSRM) is disordered.

It belongs to the bacterial ribosomal protein bS20 family.

Its function is as follows. Binds directly to 16S ribosomal RNA. In Koribacter versatilis (strain Ellin345), this protein is Small ribosomal subunit protein bS20.